Reading from the N-terminus, the 736-residue chain is Dynamin-1-like protein (736 aa).

An N-acetylmethionine modification is found at methionine 1. The Dynamin-type G domain maps to 22–302 (IIQLPQIVVV…LMHHIRDCLP (281 aa)). The segment at 32-39 (GTQSSGKS) is G1 motif. 32–40 (GTQSSGKSS) contacts GTP. Residues 58–60 (VTR) are G2 motif. Positions 146–149 (DLPG) are G3 motif. The segment at 215–218 (TKLD) is G4 motif. Residues 215–221 (TKLDLMD) and 246–249 (NRSQ) contribute to the GTP site. Residues 245-248 (VNRS) form a G5 motif region. The middle domain stretch occupies residues 344 to 489 (YCNTIEGTAK…NEMVHNLVAI (146 aa)). An interaction with GSK3B region spans residues 448–685 (NYSTQELLRF…NHVKDTLQSE (238 aa)). The tract at residues 502-569 (ADACGLMNNN…IQDNRRETKN (68 aa)) is b domain. Positions 522 to 554 (RELPSAGSRDKSSKVPSALAPASQEPPPAASAE) are disordered. Position 529 is a phosphoserine (serine 529). Glycyl lysine isopeptide (Lys-Gly) (interchain with G-Cter in SUMO) cross-links involve residues lysine 532, lysine 535, lysine 558, and lysine 568. The interval 542 to 736 (PASQEPPPAA…IAEIRETHLW (195 aa)) is C-terminal dimerization domain. Residues 566 to 588 (ETKNVPSAGGGIGDGGQEPTTGN) are disordered. Residues threonine 585 and threonine 586 are each glycosylated (O-linked (GlcNAc) threonine). Lysine 594 participates in a covalent cross-link: Glycyl lysine isopeptide (Lys-Gly) (interchain with G-Cter in SUMO). Lysine 597 bears the N6-acetyllysine; alternate mark. Lysine 597 is covalently cross-linked (Glycyl lysine isopeptide (Lys-Gly) (interchain with G-Cter in SUMO); alternate). Residue lysine 606 forms a Glycyl lysine isopeptide (Lys-Gly) (interchain with G-Cter in SUMO) linkage. Serine 607 is modified (phosphoserine). Lysine 608 participates in a covalent cross-link: Glycyl lysine isopeptide (Lys-Gly) (interchain with G-Cter in SUMO). Serine 616 carries the phosphoserine; by PINK1 modification. Serine 637 is modified (phosphoserine; by CAMK1 and PKA). An S-nitrosocysteine modification is found at cysteine 644. The GED domain maps to 644–735 (CEVIERLIKS…IIAEIRETHL (92 aa)). The important for homodimerization stretch occupies residues 654–668 (YFLIVRKNIQDSVPK).

This sequence belongs to the TRAFAC class dynamin-like GTPase superfamily. Dynamin/Fzo/YdjA family. As to quaternary structure, homotetramer; dimerizes through the N-terminal GTP-middle region of one molecule binding to the GED domain of another DNM1L molecule. Oligomerizes in a GTP-dependent manner to form membrane-associated tubules with a spiral pattern. Interacts with GSK3B and MARCHF5. Interacts (via the GTPase and B domains) with UBE2I; the interaction promotes sumoylation of DNM1L, mainly in its B domain. Interacts with PPP3CA; the interaction dephosphorylates DNM1L and regulates its transition to mitochondria. Interacts with BCL2L1 isoform BCL-X(L) and CLTA; DNM1L and BCL2L1 isoform BCL-X(L) may form a complex in synaptic vesicles that also contains clathrin and MFF. Interacts with MFF; the interaction is inhibited by C11orf65/MFI. Interacts with FIS1. Interacts with MIEF2 and MIEF1; GTP-dependent, regulates GTP hydrolysis and DNM1L oligomerization. Interacts with PGAM5; this interaction leads to dephosphorylation at Ser-656 and activation of GTPase activity and eventually to mitochondria fragmentation. Interacts with RALBP1; during mitosis, recruits DNM1L to the mitochondrion and mediates its activation by the mitotic kinase cyclin B-CDK1. Interacts with FUNDC1; this interaction recruits DNM1L/DRP1 at ER-mitochondria contact sites. In terms of processing, phosphorylation/dephosphorylation events on two sites near the GED domain regulate mitochondrial fission. Phosphorylation on Ser-637 inhibits mitochondrial fission probably through preventing intramolecular interaction. Dephosphorylated on this site by PPP3CA which promotes mitochondrial fission. Phosphorylation on Ser-616 by Pink1 activates the GTPase activity and promotes mitochondrial fission. Phosphorylated in a circadian manner at Ser-637. Dephosphorylated by PGAM5. Post-translationally, sumoylated on various lysine residues within the B domain, probably by MUL1. Sumoylation positively regulates mitochondrial fission. Desumoylated by SENP5 during G2/M transition of mitosis. Appears to be linked to its catalytic activity. S-nitrosylation increases DNM1L dimerization, mitochondrial fission and causes neuronal damage. In terms of processing, O-GlcNAcylation augments the level of the GTP-bound active form of DNM1L and induces translocation from the cytoplasm to mitochondria in cardiomyocytes. It also decreases phosphorylation at Ser-637. Post-translationally, ubiquitination by MARCHF5 affects mitochondrial morphology. Expressed in the cerebellum and in several regions of the cerebrum and diencephalon. Strongly expressed in the cerebellar Purkinje cells and in the pontile giant neurons. In terms of tissue distribution, widely expressed. As to expression, brain-specific. Brain-specific (at protein level). Expressed in most of the subregions of the brain, including the cerebellum, midbrain, hippocampus, striatum, cerebral cortex, and brain stem. Weakly expressed in the olfactory bulb.

Its subcellular location is the cytoplasm. It is found in the cytosol. It localises to the golgi apparatus. The protein resides in the endomembrane system. The protein localises to the mitochondrion outer membrane. Its subcellular location is the peroxisome. It is found in the membrane. It localises to the clathrin-coated pit. The protein resides in the cytoplasmic vesicle. The protein localises to the secretory vesicle. Its subcellular location is the synaptic vesicle membrane. It is found in the lysosome. It localises to the late endosome. The protein resides in the cell membrane. The protein localises to the postsynaptic density. The catalysed reaction is GTP + H2O = GDP + phosphate + H(+). Functionally, functions in mitochondrial and peroxisomal division. Mediates membrane fission through oligomerization into membrane-associated tubular structures that wrap around the scission site to constrict and sever the mitochondrial membrane through a GTP hydrolysis-dependent mechanism. The specific recruitment at scission sites is mediated by membrane receptors like MFF, MIEF1 and MIEF2 for mitochondrial membranes. While the recruitment by the membrane receptors is GTP-dependent, the following hydrolysis of GTP induces the dissociation from the receptors and allows DNM1L filaments to curl into closed rings that are probably sufficient to sever a double membrane. Acts downstream of PINK1 to promote mitochondrial fission in a PRKN-dependent manner. Plays an important role in mitochondrial fission during mitosis. Required for formation of endocytic vesicles. Through its function in mitochondrial division, ensures the survival of at least some types of postmitotic neurons, including Purkinje cells, by suppressing oxidative damage. Required for normal brain development, including that of cerebellum. Facilitates developmentally regulated apoptosis during neural tube formation. Required for a normal rate of cytochrome c release and caspase activation during apoptosis; this requirement may depend upon the cell type and the physiological apoptotic cues. Proposed to regulate synaptic vesicle membrane dynamics through association with BCL2L1 isoform Bcl-X(L) which stimulates its GTPase activity in synaptic vesicles; the function may require its recruitment by MFF to clathrin-containing vesicles. Required for programmed necrosis execution. Rhythmic control of its activity following phosphorylation at Ser-637 is essential for the circadian control of mitochondrial ATP production. Regulates postsynaptic clathrin-mediated endocytosis by positioning the endocytic zone at the postsynaptic density, independently of mitochondrial division. The protein is Dynamin-1-like protein of Mus musculus (Mouse).